The following is a 392-amino-acid chain: Succinyl-diaminopimelate desuccinylase (392 aa).

Zn(2+) is bound at residue histidine 71. Residue aspartate 73 is part of the active site. Aspartate 102 lines the Zn(2+) pocket. Residue glutamate 144 is the Proton acceptor of the active site. Residues glutamate 145, glutamate 173, and histidine 362 each coordinate Zn(2+).

This sequence belongs to the peptidase M20A family. DapE subfamily. As to quaternary structure, homodimer. The cofactor is Zn(2+). It depends on Co(2+) as a cofactor.

The catalysed reaction is N-succinyl-(2S,6S)-2,6-diaminopimelate + H2O = (2S,6S)-2,6-diaminopimelate + succinate. It functions in the pathway amino-acid biosynthesis; L-lysine biosynthesis via DAP pathway; LL-2,6-diaminopimelate from (S)-tetrahydrodipicolinate (succinylase route): step 3/3. In terms of biological role, catalyzes the hydrolysis of N-succinyl-L,L-diaminopimelic acid (SDAP), forming succinate and LL-2,6-diaminopimelate (DAP), an intermediate involved in the bacterial biosynthesis of lysine and meso-diaminopimelic acid, an essential component of bacterial cell walls. The polypeptide is Succinyl-diaminopimelate desuccinylase (Rhodospirillum rubrum (strain ATCC 11170 / ATH 1.1.1 / DSM 467 / LMG 4362 / NCIMB 8255 / S1)).